The primary structure comprises 396 residues: MKRHLKACLWVLCFASTALSSLADTTSPKPTLASAFSGKSKTTAVSTALKANKTASELLPMVINTWNFTAANVLAWRILKQSKGGLRQTRNAVVEGCSKCEKLQCDRTVGYGGSPDELGETTLDAMVMDGATMEVGAVAGLRRIKDAIKVARHVLEHTQHTMLVGDAASAFANAMGFESESLVTPESKDMWLQWTAENCQPNFWKNVHPDPKVSCGPYKPRPTPLTRWKEDRARNEYEIGRKNHDTIGMIAIDVESNIHAGTSTNGARHKIPGRVGDSPIPGAGAYADNEVGAAVATGDGDVMMRFLPSLLAVEAMRAGKPPADAAEESLRRIIRHHKDFMGALIAVDRLGRYGAACYGLDEFPFMVSSPAGRDGPTRLETVKCIAGQDKVNIVSF.

A signal peptide spans 1–23; that stretch reads MKRHLKACLWVLCFASTALSSLA. 2 disulfide bridges follow: Cys-100-Cys-105 and Cys-199-Cys-215. Residue Thr-246 is the Nucleophile of the active site. Substrate is bound by residues 274-277 and 297-300; these read RVGD and TGDG. The cysteines at positions 357 and 384 are disulfide-linked.

It belongs to the Ntn-hydrolase family. Heterotetramer of two alpha and two beta chains arranged as a dimer of alpha/beta heterodimers. Post-translationally, cleaved into an alpha and beta chain by autocatalysis; this activates the enzyme. The N-terminal residue of the beta subunit is responsible for the nucleophile hydrolase activity.

It carries out the reaction N(4)-(beta-N-acetyl-D-glucosaminyl)-L-asparagine + H2O = N-acetyl-beta-D-glucosaminylamine + L-aspartate + H(+). Its function is as follows. Cleaves the GlcNAc-Asn bond which joins oligosaccharides to the peptide of asparagine-linked glycoproteins. The chain is Putative N(4)-(beta-N-acetylglucosaminyl)-L-asparaginase GE19290 from Drosophila yakuba (Fruit fly).